A 291-amino-acid chain; its full sequence is Flap endonuclease (291 aa).

A helical arch region spans residues 82–116; the sequence is YKGNRDEKYAQRTEEEKALDEQFFEYLKDAFELCK. Lys83 is a DNA binding site. Residues Asp130, Asp153, Asp155, and Asp201 each coordinate Mg(2+). Residues 188 to 224 are DNA-binding; H3TH; sequence DVEQFISLKAIMGDLGDNIRGVEGIGAKRGYNIIREF. The 74-residue stretch at 190–263 folds into the 5'-3' exonuclease domain; that stretch reads EQFISLKAIM…FRNLILVDLP (74 aa). K(+)-binding residues include Val209 and Ile212.

Mg(2+) is required as a cofactor. It depends on K(+) as a cofactor.

It carries out the reaction Exonucleolytic cleavage in the 5'- to 3'-direction to yield nucleoside 5'-phosphates.. Inhibited by p-hydroxymercuribenzoate (PHMB). Catalyzes both the 5'-exonucleolytic and structure-specific endonucleolytic hydrolysis of DNA branched nucleic acid molecules and probably plays a role in viral genome replication. Active on flap (branched duplex DNA containing a free single-stranded 5'-end), 5'overhangs and pseudo-Y structures. The substrates require a free, single-stranded 5' end, with endonucleolytic hydrolysis occurring at the junction of double- and single-stranded DNA. This function may be used for example to trim such branched molecules generated by Okazaki fragments synthesis during replication. This Escherichia phage T5 (Enterobacteria phage T5) protein is Flap endonuclease (D15).